The primary structure comprises 249 residues: tRNA (guanine-N(1)-)-methyltransferase (249 aa).

S-adenosyl-L-methionine-binding positions include Gly118 and 138-143 (IGDYVL).

This sequence belongs to the RNA methyltransferase TrmD family. Homodimer.

Its subcellular location is the cytoplasm. It carries out the reaction guanosine(37) in tRNA + S-adenosyl-L-methionine = N(1)-methylguanosine(37) in tRNA + S-adenosyl-L-homocysteine + H(+). Its function is as follows. Specifically methylates guanosine-37 in various tRNAs. The polypeptide is tRNA (guanine-N(1)-)-methyltransferase (Alkaliphilus oremlandii (strain OhILAs) (Clostridium oremlandii (strain OhILAs))).